The chain runs to 327 residues: Secondary metabolism regulator LAE1 (327 aa).

It belongs to the methyltransferase superfamily. LaeA methyltransferase family.

The protein localises to the nucleus. It carries out the reaction L-methionyl-[protein] + S-adenosyl-L-methionine = S-methyl-L-methionyl-[protein] + S-adenosyl-L-homocysteine. Secondary metabolism regulator that controls the expression of the tenuazonic acid biosynthesis cluster. Methyltransferase that performs automethylation. No other methyl-accepting substrate has been identified yet. In Pyricularia oryzae (strain 70-15 / ATCC MYA-4617 / FGSC 8958) (Rice blast fungus), this protein is Secondary metabolism regulator LAE1.